The sequence spans 187 residues: Lysozyme 3 (187 aa).

An N-terminal signal peptide occupies residues 1–18 (MNGLFLFCVATTAALAYG). Positions 68-183 (TGIVSQQCLQ…WSHVHAQGCS (116 aa)) constitute an I-type lysozyme domain. Cystine bridges form between Cys-75-Cys-151, Cys-80-Cys-86, Cys-91-Cys-100, Cys-113-Cys-133, Cys-123-Cys-129, and Cys-147-Cys-165. Glu-83 functions as the Proton donor in the catalytic mechanism. Asp-94 (nucleophile) is an active-site residue. Substrate is bound at residue 106 to 112 (KEGYWHD). Substrate-binding positions include Tyr-137 and 158–160 (HNG).

Highest levels of expression detected in the digestive glands. Lower levels in the mantle, labial palps, gills and style-midgut sac, and lowest levels detected in the hemocytes. Not detected in the gonads.

It localises to the secreted. It carries out the reaction Hydrolysis of (1-&gt;4)-beta-linkages between N-acetylmuramic acid and N-acetyl-D-glucosamine residues in a peptidoglycan and between N-acetyl-D-glucosamine residues in chitodextrins.. Its function is as follows. Has antibacterial activity against the Gram-negative bacterium E.coli. No antibacterial activity detected against the Gram-negative bacterium V.vulnificus. The sequence is that of Lysozyme 3 from Crassostrea virginica (Eastern oyster).